Here is a 159-residue protein sequence, read N- to C-terminus: RNA pyrophosphohydrolase (159 aa).

One can recognise a Nudix hydrolase domain in the interval Gly6 to Lys149. The short motif at Gly38–Gly59 is the Nudix box element.

It belongs to the Nudix hydrolase family. RppH subfamily. A divalent metal cation serves as cofactor.

In terms of biological role, accelerates the degradation of transcripts by removing pyrophosphate from the 5'-end of triphosphorylated RNA, leading to a more labile monophosphorylated state that can stimulate subsequent ribonuclease cleavage. The sequence is that of RNA pyrophosphohydrolase from Pseudomonas aeruginosa (strain LESB58).